Here is a 566-residue protein sequence, read N- to C-terminus: Solute carrier family 22 member 16 (566 aa).

A helical membrane pass occupies residues 20–40 (FASAFQTISCGIHYLASVFIA). 3 N-linked (GlcNAc...) asparagine glycosylation sites follow: N52, N60, and N112. The next 5 helical transmembrane spans lie at 149-169 (LIQP…GDIA), 176-196 (PIIW…AFTF), 201-221 (FVIV…VVFV), 237-257 (MHVH…GFLV), and 261-281 (WIYQ…CWML). An N-linked (GlcNAc...) asparagine glycan is attached at N344. The next 6 helical transmembrane spans lie at 351–371 (TITV…FALN), 381–401 (LNLF…CLGM), 408–428 (NTLA…MLIP), 436–456 (IAMS…IYLY), 468–488 (LAVG…PFCV), and 493–513 (VWIF…GILT).

It belongs to the major facilitator (TC 2.A.1) superfamily. Organic cation transporter (TC 2.A.1.19) family.

It is found in the membrane. Its function is as follows. High affinity carnitine transporter. This chain is Solute carrier family 22 member 16 (slc22a16), found in Xenopus laevis (African clawed frog).